The following is an 88-amino-acid chain: Large ribosomal subunit protein bL27 (88 aa).

Belongs to the bacterial ribosomal protein bL27 family.

This Mycolicibacterium vanbaalenii (strain DSM 7251 / JCM 13017 / BCRC 16820 / KCTC 9966 / NRRL B-24157 / PYR-1) (Mycobacterium vanbaalenii) protein is Large ribosomal subunit protein bL27.